Reading from the N-terminus, the 396-residue chain is Elongation factor Tu (396 aa).

One can recognise a tr-type G domain in the interval 10 to 206 (KPHVNVGTIG…ALDTYIPTPE (197 aa)). Residues 19-26 (GHVDHGKT) are G1. 19-26 (GHVDHGKT) contacts GTP. A Mg(2+)-binding site is contributed by threonine 26. The interval 60–64 (GITIN) is G2. A G3 region spans residues 81–84 (DCPG). Residues 81-85 (DCPGH) and 136-139 (NKAD) each bind GTP. The tract at residues 136–139 (NKAD) is G4. The segment at 174–176 (SAK) is G5.

The protein belongs to the TRAFAC class translation factor GTPase superfamily. Classic translation factor GTPase family. EF-Tu/EF-1A subfamily. In terms of assembly, monomer.

It is found in the cytoplasm. It carries out the reaction GTP + H2O = GDP + phosphate + H(+). In terms of biological role, GTP hydrolase that promotes the GTP-dependent binding of aminoacyl-tRNA to the A-site of ribosomes during protein biosynthesis. In Bordetella bronchiseptica (strain ATCC BAA-588 / NCTC 13252 / RB50) (Alcaligenes bronchisepticus), this protein is Elongation factor Tu.